The primary structure comprises 351 residues: Selenide, water dikinase (351 aa).

Sec-15 is an active-site residue. Position 15 (Sec-15) is a non-standard amino acid, selenocysteine. ATP is bound by residues Lys-18 and 47 to 49; that span reads DNE. Mg(2+) is bound at residue Asp-50. Residues Asp-67, Asp-90, and 138 to 140 contribute to the ATP site; that span reads GHS. Residue Asp-90 participates in Mg(2+) binding. Asp-227 provides a ligand contact to Mg(2+).

It belongs to the selenophosphate synthase 1 family. Class I subfamily. As to quaternary structure, homodimer. The cofactor is Mg(2+).

The enzyme catalyses hydrogenselenide + ATP + H2O = selenophosphate + AMP + phosphate + 2 H(+). In terms of biological role, synthesizes selenophosphate from selenide and ATP. This chain is Selenide, water dikinase, found in Nitratidesulfovibrio vulgaris (strain ATCC 29579 / DSM 644 / CCUG 34227 / NCIMB 8303 / VKM B-1760 / Hildenborough) (Desulfovibrio vulgaris).